Here is a 556-residue protein sequence, read N- to C-terminus: (-)-alpha-pinene synthase (556 aa).

Mg(2+) contacts are provided by Asp309, Asp313, Asp453, and Glu461. The DDXXD motif signature appears at 309-313 (DDMYD).

This sequence belongs to the terpene synthase family. Tpsa subfamily. Mg(2+) serves as cofactor. Mn(2+) is required as a cofactor. In terms of tissue distribution, expressed in ripe fruits and roots. Not detected in vegetative tissues.

Its subcellular location is the cytoplasm. The protein localises to the cytosol. It carries out the reaction (2E)-geranyl diphosphate = (1S,5S)-alpha-pinene + diphosphate. It functions in the pathway secondary metabolite biosynthesis; terpenoid biosynthesis. Functionally, monoterpene synthase catalyzing the production of (-)-alpha-pinene, beta-phellandrene and beta-myrcene as the major products. Unable to use farnesyl diphosphate as substrate. Exclusively expressed in the fruit of wild strawberries. Not detected in cultivated varieties. The polypeptide is (-)-alpha-pinene synthase (Fragaria vesca (Woodland strawberry)).